Consider the following 71-residue polypeptide: Exodeoxyribonuclease 7 small subunit (71 aa).

Belongs to the XseB family. In terms of assembly, heterooligomer composed of large and small subunits.

The protein resides in the cytoplasm. It carries out the reaction Exonucleolytic cleavage in either 5'- to 3'- or 3'- to 5'-direction to yield nucleoside 5'-phosphates.. Its function is as follows. Bidirectionally degrades single-stranded DNA into large acid-insoluble oligonucleotides, which are then degraded further into small acid-soluble oligonucleotides. This is Exodeoxyribonuclease 7 small subunit from Clostridium botulinum (strain Loch Maree / Type A3).